The following is a 305-amino-acid chain: UDP-3-O-acyl-N-acetylglucosamine deacetylase (305 aa).

Residues His78, His237, and Asp241 each contribute to the Zn(2+) site. His264 (proton donor) is an active-site residue.

Belongs to the LpxC family. The cofactor is Zn(2+).

It catalyses the reaction a UDP-3-O-[(3R)-3-hydroxyacyl]-N-acetyl-alpha-D-glucosamine + H2O = a UDP-3-O-[(3R)-3-hydroxyacyl]-alpha-D-glucosamine + acetate. It participates in glycolipid biosynthesis; lipid IV(A) biosynthesis; lipid IV(A) from (3R)-3-hydroxytetradecanoyl-[acyl-carrier-protein] and UDP-N-acetyl-alpha-D-glucosamine: step 2/6. Its function is as follows. Catalyzes the hydrolysis of UDP-3-O-myristoyl-N-acetylglucosamine to form UDP-3-O-myristoylglucosamine and acetate, the committed step in lipid A biosynthesis. This chain is UDP-3-O-acyl-N-acetylglucosamine deacetylase, found in Cupriavidus metallidurans (strain ATCC 43123 / DSM 2839 / NBRC 102507 / CH34) (Ralstonia metallidurans).